The chain runs to 700 residues: Methionine--tRNA ligase (700 aa).

Positions 13–23 (PYANGDIHLGH) match the 'HIGH' region motif. Zn(2+)-binding residues include Cys144, Cys147, Cys157, and Cys160. Residues 341–345 (KMSKS) carry the 'KMSKS' region motif. Residue Lys344 participates in ATP binding. The interval 562–587 (QVGAPTASQDDKAAAKNTSPAAMPSS) is disordered. The segment covering 577–587 (KNTSPAAMPSS) has biased composition (polar residues). One can recognise a tRNA-binding domain in the interval 598 to 700 (DFAKVEMKVA…DEAVIGDSLA (103 aa)).

Belongs to the class-I aminoacyl-tRNA synthetase family. MetG type 1 subfamily. In terms of assembly, homodimer. Zn(2+) is required as a cofactor.

The protein resides in the cytoplasm. The enzyme catalyses tRNA(Met) + L-methionine + ATP = L-methionyl-tRNA(Met) + AMP + diphosphate. Functionally, is required not only for elongation of protein synthesis but also for the initiation of all mRNA translation through initiator tRNA(fMet) aminoacylation. The chain is Methionine--tRNA ligase from Psychrobacter cryohalolentis (strain ATCC BAA-1226 / DSM 17306 / VKM B-2378 / K5).